A 241-amino-acid polypeptide reads, in one-letter code: L-aspartate dehydrogenase (241 aa).

Residues 10–11 (NI), D28, 56–57 (AS), 63–64 (EY), 78–79 (IS), A109, and N164 contribute to the NAD(+) site. Residue H193 is part of the active site.

The protein belongs to the L-aspartate dehydrogenase family. Homodimer.

The catalysed reaction is L-aspartate + NADP(+) + H2O = oxaloacetate + NH4(+) + NADPH + H(+). It catalyses the reaction L-aspartate + NAD(+) + H2O = oxaloacetate + NH4(+) + NADH + H(+). Its pathway is cofactor biosynthesis; NAD(+) biosynthesis; iminoaspartate from L-aspartate (dehydrogenase route): step 1/1. With respect to regulation, competitively inhibited by L-malate and NH(4)(+). Its function is as follows. Specifically catalyzes the NAD or NADP-dependent dehydrogenation of L-aspartate to iminoaspartate. Does not show aspartate oxidase activity. Is also able to catalyze the reverse reaction, i.e. the reductive amination of oxaloacetate. This Thermotoga maritima (strain ATCC 43589 / DSM 3109 / JCM 10099 / NBRC 100826 / MSB8) protein is L-aspartate dehydrogenase.